Reading from the N-terminus, the 302-residue chain is uncharacterized protein (302 aa).

Disordered regions lie at residues 15-34 (RHSTIPSDTHTSREKPRFHK), 143-195 (GMPL…PSHL), and 221-246 (GSEARSLSLRRQESQPHSGSSRRESV). Basic and acidic residues predominate over residues 172–189 (HSDENKATGQGRENRDQP).

This is an uncharacterized protein from Homo sapiens (Human).